A 64-amino-acid chain; its full sequence is Alternative prion protein (64 aa).

The segment at 1–22 is disordered; that stretch reads MEHWGEPIPGTGQSWRQPLSTS. The span at 11–22 shows a compositional bias: polar residues; that stretch reads TGQSWRQPLSTS. Residues 40–58 form a helical membrane-spanning segment; sequence WRWLGSAPWWWLGTATWWW.

It localises to the mitochondrion outer membrane. The polypeptide is Alternative prion protein (Ovis aries (Sheep)).